The sequence spans 242 residues: N-alpha-acetyltransferase 60 (242 aa).

Topologically, residues 1 to 192 (MTEVVPSSAL…GGHPPWTILD (192 aa)) are cytoplasmic. The region spanning 13-182 (VSLRLLCHDD…DGFTYVLYIN (170 aa)) is the N-acetyltransferase domain. Tyr38 is a substrate binding site. Position 79 is an N6-acetyllysine; by autocatalysis (Lys79). Tyr97 is a catalytic residue. Residue Leu99 coordinates substrate. Acetyl-CoA is bound at residue 101-103 (LGV). N6-acetyllysine; by autocatalysis occurs at positions 105, 109, and 121. 109–114 (KHGIGS) serves as a coordination point for acetyl-CoA. His138 is a catalytic residue. Acetyl-CoA-binding positions include Asn143 and 150–153 (YENR). Lys156 bears the N6-acetyllysine; by autocatalysis mark. The required for homodimerization stretch occupies residues 162–173 (PYYYSIRGVLKD). Tyr165 contacts substrate. Positions 193–236 (YIQHLGSALASLSPCSIPHRVYRQAHSLLCSFLPWSGISSKSGI) form an intramembrane region, helical. Over 237–242 (EYSRTM) the chain is Cytoplasmic.

It belongs to the acetyltransferase family. NAA60 subfamily. Monomer and homodimer; monomer in presence of substrate and homodimer in its absence. In terms of processing, acetylated: autoacetylation is required for optimal acetyltransferase activity.

It is found in the golgi apparatus membrane. It catalyses the reaction N-terminal L-methionyl-[transmembrane protein] + acetyl-CoA = N-terminal N(alpha)-acetyl-L-methionyl-[transmembrane protein] + CoA + H(+). The catalysed reaction is L-lysyl-[protein] + acetyl-CoA = N(6)-acetyl-L-lysyl-[protein] + CoA + H(+). Functionally, N-alpha-acetyltransferase that specifically mediates the acetylation of N-terminal residues of the transmembrane proteins, with a strong preference for N-termini facing the cytosol. Displays N-terminal acetyltransferase activity towards a range of N-terminal sequences including those starting with Met-Lys, Met-Val, Met-Ala and Met-Met. Required for normal chromosomal segregation during anaphase. May also show histone acetyltransferase activity; such results are however unclear in vivo and would require additional experimental evidences. This chain is N-alpha-acetyltransferase 60, found in Homo sapiens (Human).